Reading from the N-terminus, the 285-residue chain is Probable endonuclease 4 (285 aa).

Residues H69, H109, E145, D179, H182, H216, D229, H231, and E261 each coordinate Zn(2+).

This sequence belongs to the AP endonuclease 2 family. The cofactor is Zn(2+).

It catalyses the reaction Endonucleolytic cleavage to 5'-phosphooligonucleotide end-products.. Endonuclease IV plays a role in DNA repair. It cleaves phosphodiester bonds at apurinic or apyrimidinic (AP) sites, generating a 3'-hydroxyl group and a 5'-terminal sugar phosphate. This Escherichia coli (strain SMS-3-5 / SECEC) protein is Probable endonuclease 4.